Here is a 586-residue protein sequence, read N- to C-terminus: Pyruvate kinase (586 aa).

Residue arginine 32 participates in substrate binding. K(+) contacts are provided by asparagine 34, serine 36, aspartate 66, and threonine 67. ATP is bound at residue 34 to 37; sequence NFSH. The ATP site is built by arginine 73 and lysine 156. Glutamate 222 is a binding site for Mg(2+). Substrate is bound by residues glycine 245, aspartate 246, and threonine 278. Aspartate 246 contacts Mg(2+).

It belongs to the pyruvate kinase family. This sequence in the C-terminal section; belongs to the PEP-utilizing enzyme family. Requires Mg(2+) as cofactor. K(+) is required as a cofactor.

It catalyses the reaction pyruvate + ATP = phosphoenolpyruvate + ADP + H(+). It functions in the pathway carbohydrate degradation; glycolysis; pyruvate from D-glyceraldehyde 3-phosphate: step 5/5. This chain is Pyruvate kinase (pyk), found in Staphylococcus haemolyticus (strain JCSC1435).